The sequence spans 159 residues: Cyclic pyranopterin monophosphate synthase (159 aa).

Residues L76–H78 and M114–E115 each bind substrate. D129 is an active-site residue.

This sequence belongs to the MoaC family. Homohexamer; trimer of dimers.

It catalyses the reaction (8S)-3',8-cyclo-7,8-dihydroguanosine 5'-triphosphate = cyclic pyranopterin phosphate + diphosphate. The protein operates within cofactor biosynthesis; molybdopterin biosynthesis. Its function is as follows. Catalyzes the conversion of (8S)-3',8-cyclo-7,8-dihydroguanosine 5'-triphosphate to cyclic pyranopterin monophosphate (cPMP). The chain is Cyclic pyranopterin monophosphate synthase from Oleidesulfovibrio alaskensis (strain ATCC BAA-1058 / DSM 17464 / G20) (Desulfovibrio alaskensis).